A 366-amino-acid chain; its full sequence is MNFTVGFKPLLGDAHSMDNLEKQLICPICLEMFSKPVVILPCQHNLCRKCANDVFQASNPLWQSRSSTTVSSGGRFRCPSCRHEVVLDRHGVYGLQRNLLVENIIDIYKQESSRPLHSKAEQHLMCEEHEDEKINIYCLSCEVPTCSLCKVFGAHKDCEVAPLPTIYKRQKSELSDGIAMLVAGNDRVQAVITQMEEVCQTIEENSRRQKQLLNQRFEGLCAVLEERKGELLQALAREQEEKLQRVRGLIRQYGDHLEASSKLVESAIQSMEEPQMALYLQQAKELINKVGTMSKVELAGRPEPGYERMDQFTVSVEHVAEMLRTIDFQPGTSGEEEDEEVAVEGEEGNAGPEEERTDGRESTGQH.

The RING-type zinc finger occupies 26 to 82; the sequence is CPICLEMFSKPVVILPCQHNLCRKCANDVFQASNPLWQSRSSTTVSSGGRFRCPSCR. The B box-type zinc finger occupies 121–163; sequence EQHLMCEEHEDEKINIYCLSCEVPTCSLCKVFGAHKDCEVAPL. Zn(2+)-binding residues include Cys-126, His-129, Cys-149, and His-155. The interval 168 to 211 is mediates microtubule-binding and homooligomerization; that stretch reads KRQKSELSDGIAMLVAGNDRVQAVITQMEEVCQTIEENSRRQKQ. A coiled-coil region spans residues 185 to 258; it reads NDRVQAVITQ…LIRQYGDHLE (74 aa). Residues 271-329 enclose the COS domain; sequence MEEPQMALYLQQAKELINKVGTMSKVELAGRPEPGYERMDQFTVSVEHVAEMLRTIDFQ. The interval 326–366 is disordered; it reads IDFQPGTSGEEEDEEVAVEGEEGNAGPEEERTDGRESTGQH. Positions 334–347 are enriched in acidic residues; that stretch reads GEEEDEEVAVEGEE. Residues 353–366 show a composition bias toward basic and acidic residues; that stretch reads EEERTDGRESTGQH.

In terms of assembly, homooligomer and heterooligomer. Interacts with TRIM63 and probably with TRIM55. Interacts with tubulin.

It localises to the cytoplasm. Its subcellular location is the cytoskeleton. The protein resides in the myofibril. The protein localises to the sarcomere. It is found in the z line. Its function is as follows. May bind and stabilize microtubules during myotubes formation. The protein is Tripartite motif-containing protein 54 (TRIM54) of Bos taurus (Bovine).